The sequence spans 265 residues: MAKQTVIHEVGKITAKRLSDNKVIASGVTQMTQFSQQVQQDFLKGGWGNRDLYVINSSKEVSGNVRNAFFDLDFMAMQQGVKIENETISVWEDESLTVSDTGTVILSYLPLSKVSLTNEDGDQIEVDAASKTVTVPDTFATKGEALAVHYQIEVEAETVEINGEKFSENYYFEIHTIEYDPKTSKIYSDLYIQLPKVNFSGEADMSFEAGNAYTPEIGYRALADNNGKIGNFARVKRKADGTKGVVTSDEGTGSSQSSDLGGTTE.

Positions 238-265 are disordered; it reads KADGTKGVVTSDEGTGSSQSSDLGGTTE. A compositionally biased stretch (polar residues) spans 249 to 265; sequence DEGTGSSQSSDLGGTTE.

The chain is SPbeta prophage-derived uncharacterized protein YomU (yomU) from Bacillus subtilis (strain 168).